A 290-amino-acid chain; its full sequence is 3-hydroxyacyl-thioester dehydratase Y (290 aa).

The disordered stretch occupies residues 147-169 (FGGARGERPAAPEFPDRHPDARI). The span at 151–169 (RGERPAAPEFPDRHPDARI) shows a compositional bias: basic and acidic residues. Residues 161-271 (PDRHPDARID…AVFRTEVAGS (111 aa)) enclose the MaoC-like domain.

It belongs to the enoyl-CoA hydratase/isomerase family.

The catalysed reaction is a (3R)-3-hydroxyacyl-CoA = a (2E)-enoyl-CoA + H2O. It carries out the reaction (3R)-hydroxyhexanoyl-CoA = (2E)-hexenoyl-CoA + H2O. The enzyme catalyses (2E)-octenoyl-CoA + H2O = (3R)-hydroxyoctanoyl-CoA. It catalyses the reaction (3R)-3-hydroxydecanoyl-CoA = (2E)-decenoyl-CoA + H2O. The catalysed reaction is (3R)-3-hydroxydodecanoyl-CoA = (2E)-dodecenoyl-CoA + H2O. It carries out the reaction (3R)-hydroxyhexadecanoyl-CoA = (2E)-hexadecenoyl-CoA + H2O. Functionally, shows trans-enoyl-CoA hydratase/3-hydroxyacyl-CoA dehydratase activity. In vitro, can hydrate various enoyl-CoA such as (2E)-hexenoyl-CoA, (2E)-octenoyl-CoA, (2E)-decenoyl-CoA, (2E)-dodecenoyl-CoA and (2E)-hexadecenoyl-CoA. May contribute to the persistence of the tuberculosis infection by inducing COX-2 expression in macrophages through MAPK-NF-kappaB signaling pathway. The sequence is that of 3-hydroxyacyl-thioester dehydratase Y from Mycobacterium tuberculosis (strain ATCC 25618 / H37Rv).